The sequence spans 215 residues: Small ribosomal subunit protein uS7 (215 aa).

This sequence belongs to the universal ribosomal protein uS7 family. As to quaternary structure, part of the 30S ribosomal subunit.

One of the primary rRNA binding proteins, it binds directly to 16S rRNA where it nucleates assembly of the head domain of the 30S subunit. Is located at the subunit interface close to the decoding center. The chain is Small ribosomal subunit protein uS7 from Thermococcus celer.